The sequence spans 167 residues: UPF0336 protein MAP_4109 (167 aa).

The MaoC-like domain maps to 21 to 124 (GREQLRQFAL…RFGADIVVTK (104 aa)).

It belongs to the UPF0336 family.

This Mycolicibacterium paratuberculosis (strain ATCC BAA-968 / K-10) (Mycobacterium paratuberculosis) protein is UPF0336 protein MAP_4109.